Here is a 155-residue protein sequence, read N- to C-terminus: 6,7-dimethyl-8-ribityllumazine synthase (155 aa).

Residues Phe23, 57 to 59 (AFE), and 81 to 83 (AVI) contribute to the 5-amino-6-(D-ribitylamino)uracil site. 86–87 (AT) contributes to the (2S)-2-hydroxy-3-oxobutyl phosphate binding site. Catalysis depends on His89, which acts as the Proton donor. Phe114 is a binding site for 5-amino-6-(D-ribitylamino)uracil. Arg128 is a binding site for (2S)-2-hydroxy-3-oxobutyl phosphate.

Belongs to the DMRL synthase family.

It catalyses the reaction (2S)-2-hydroxy-3-oxobutyl phosphate + 5-amino-6-(D-ribitylamino)uracil = 6,7-dimethyl-8-(1-D-ribityl)lumazine + phosphate + 2 H2O + H(+). It participates in cofactor biosynthesis; riboflavin biosynthesis; riboflavin from 2-hydroxy-3-oxobutyl phosphate and 5-amino-6-(D-ribitylamino)uracil: step 1/2. In terms of biological role, catalyzes the formation of 6,7-dimethyl-8-ribityllumazine by condensation of 5-amino-6-(D-ribitylamino)uracil with 3,4-dihydroxy-2-butanone 4-phosphate. This is the penultimate step in the biosynthesis of riboflavin. In Geotalea daltonii (strain DSM 22248 / JCM 15807 / FRC-32) (Geobacter daltonii), this protein is 6,7-dimethyl-8-ribityllumazine synthase.